A 49-amino-acid polypeptide reads, in one-letter code: Osteocalcin (49 aa).

One can recognise a Gla domain in the interval 1–47 (YLDPGLGAPAPYPDPLEPKREVCELNPDCDELADHIGFQEAYRRFYG). Residue proline 9 is modified to Hydroxyproline. Positions 17, 21, 24, and 30 each coordinate Ca(2+). 4-carboxyglutamate is present on residues glutamate 17, glutamate 21, and glutamate 24. Residues cysteine 23 and cysteine 29 are joined by a disulfide bond.

The protein belongs to the osteocalcin/matrix Gla protein family. In terms of processing, gamma-carboxyglutamate residues are formed by vitamin K dependent carboxylation by GGCX. These residues are essential for the binding of calcium. Decarboxylation promotes the hormone activity.

It is found in the secreted. In terms of biological role, the carboxylated form is one of the main organic components of the bone matrix, which constitutes 1-2% of the total bone protein. It acts as a negative regulator of bone formation and is required to limit bone formation without impairing bone resorption or mineralization. The carboxylated form binds strongly to apatite and calcium. Functionally, the uncarboxylated form acts as a hormone secreted by osteoblasts, which regulates different cellular processes, such as energy metabolism, male fertility and brain development. Regulates of energy metabolism by acting as a hormone favoring pancreatic beta-cell proliferation, insulin secretion and sensitivity and energy expenditure. Uncarboxylated osteocalcin hormone also promotes testosterone production in the testes: acts as a ligand for G protein-coupled receptor GPRC6A at the surface of Leydig cells, initiating a signaling response that promotes the expression of enzymes required for testosterone synthesis in a CREB-dependent manner. Also acts as a regulator of brain development: osteocalcin hormone crosses the blood-brain barrier and acts as a ligand for GPR158 on neurons, initiating a signaling response that prevents neuronal apoptosis in the hippocampus, favors the synthesis of all monoamine neurotransmitters and inhibits that of gamma-aminobutyric acid (GABA). Osteocalcin also crosses the placenta during pregnancy and maternal osteocalcin is required for fetal brain development. The polypeptide is Osteocalcin (BGLAP) (Capra hircus (Goat)).